Consider the following 423-residue polypeptide: Lipoamide acyltransferase component of branched-chain alpha-keto acid dehydrogenase complex (423 aa).

The Lipoyl-binding domain occupies 3-78 (THVIKMPDIG…AVGSELIRIE (76 aa)). N6-lipoyllysine is present on K44. Residues 137-174 (LASPAVRKRALDAGIELRYVHGSGPAGRILHEDLDAFM) enclose the Peripheral subunit-binding (PSBD) domain. Residues H395 and D399 contribute to the active site.

This sequence belongs to the 2-oxoacid dehydrogenase family. In terms of assembly, forms a 24-polypeptide structural core with octahedral symmetry. It depends on (R)-lipoate as a cofactor.

It catalyses the reaction N(6)-[(R)-dihydrolipoyl]-L-lysyl-[protein] + 2-methylpropanoyl-CoA = N(6)-[(R)-S(8)-2-methylpropanoyldihydrolipoyl]-L-lysyl-[protein] + CoA. The branched-chain alpha-keto dehydrogenase complex catalyzes the overall conversion of alpha-keto acids to acyl-CoA and CO(2). It contains multiple copies of three enzymatic components: branched-chain alpha-keto acid decarboxylase (E1), lipoamide acyltransferase (E2) and lipoamide dehydrogenase (E3). The sequence is that of Lipoamide acyltransferase component of branched-chain alpha-keto acid dehydrogenase complex (bkdB) from Pseudomonas putida (Arthrobacter siderocapsulatus).